We begin with the raw amino-acid sequence, 500 residues long: ATP synthase subunit alpha (500 aa).

ATP is bound at residue 169–176 (GDRQTGKT).

It belongs to the ATPase alpha/beta chains family. In terms of assembly, F-type ATPases have 2 components, CF(1) - the catalytic core - and CF(0) - the membrane proton channel. CF(1) has five subunits: alpha(3), beta(3), gamma(1), delta(1), epsilon(1). CF(0) has three main subunits: a(1), b(2) and c(9-12). The alpha and beta chains form an alternating ring which encloses part of the gamma chain. CF(1) is attached to CF(0) by a central stalk formed by the gamma and epsilon chains, while a peripheral stalk is formed by the delta and b chains.

Its subcellular location is the cell membrane. The catalysed reaction is ATP + H2O + 4 H(+)(in) = ADP + phosphate + 5 H(+)(out). Functionally, produces ATP from ADP in the presence of a proton gradient across the membrane. The alpha chain is a regulatory subunit. In Lactococcus lactis subsp. lactis (strain IL1403) (Streptococcus lactis), this protein is ATP synthase subunit alpha.